Consider the following 389-residue polypeptide: Inner membrane transport protein YdhP (389 aa).

At 1 to 6 (MKINYP) the chain is on the cytoplasmic side. Residues 7–27 (LLALAIGAFGIGTTEFSPMGL) form a helical membrane-spanning segment. At 28 to 43 (LPVIARGVDVSIPAAG) the chain is on the periplasmic side. A helical transmembrane segment spans residues 44 to 64 (MLISAYAVGVMVGAPLMTLLL). The Cytoplasmic portion of the chain corresponds to 65 to 70 (SHRARR). The helical transmembrane segment at 71–91 (SALIFLMAIFTLGNVLSAIAP) threads the bilayer. Topologically, residues 92 to 100 (DYMTLMLSR) are periplasmic. A helical membrane pass occupies residues 101 to 121 (ILTSLNHGAFFGLGSVVAASV). Over 122 to 130 (VPKHKQASA) the chain is Cytoplasmic. The chain crosses the membrane as a helical span at residues 131-151 (VATMFMGLTLANIGGVPAATW). Topologically, residues 152–159 (LGETIGWR) are periplasmic. A helical transmembrane segment spans residues 160 to 180 (MSFLATAGLGVISMVSLFFSL). The Cytoplasmic portion of the chain corresponds to 181-203 (PKGGAGARPEVKKELAVLMRPQV). Residues 204-224 (LSALLTTVLGAGAMFTLYTYI) traverse the membrane as a helical segment. Topologically, residues 225–236 (SPVLQSITHATP) are periplasmic. A helical membrane pass occupies residues 237 to 257 (VFVTAMLVLIGVGFSIGNYLG). At 258–266 (GKLADRSVN) the chain is on the cytoplasmic side. A helical membrane pass occupies residues 267 to 287 (GTLKGFLLLLMVIMLAIPFLA). The Periplasmic segment spans residues 288 to 290 (RNE). A helical membrane pass occupies residues 291–311 (FGAAISMVVWGAATFAVVPPL). Residues 312–330 (QMRVMRVASEAPGLSSSVN) lie on the Cytoplasmic side of the membrane. A helical transmembrane segment spans residues 331–351 (IGAFNLGNALGAAAGGAVISA). At 352–356 (GLGYS) the chain is on the periplasmic side. A helical membrane pass occupies residues 357 to 377 (FVPVMGAIVAGLALLLVFMSA). Residues 378–389 (RKQPETVCVANS) are Cytoplasmic-facing.

Belongs to the major facilitator superfamily.

The protein localises to the cell inner membrane. The chain is Inner membrane transport protein YdhP (ydhP) from Escherichia coli (strain K12).